The following is a 231-amino-acid chain: Eukaryotic translation initiation factor 4E allele Eva1 (231 aa).

The span at 1–20 shows a compositional bias: basic and acidic residues; it reads MAAAEMERTTSFDAAEKLKA. The tract at residues 1 to 34 is disordered; sequence MAAAEMERTTSFDAAEKLKAADAGGGEVDDELEE. EIF4G-binding regions lie at residues 56–59 and 66–102; these read HPLE and FDNP…NNIH. MRNA-binding positions include 74–79, Lys-106, and 124–125; these read RQIDWG and WE. The cysteines at positions 129 and 167 are disulfide-linked. Positions 150-159 are EIF4G-binding; that stretch reads YTLLAMIGHQ. Residues 174 to 179 and 219 to 223 each bind mRNA; these read RVKGEK and KRLDR.

This sequence belongs to the eukaryotic initiation factor 4E family. As to quaternary structure, EIF4F is a multi-subunit complex, the composition of which varies with external and internal environmental conditions. It is composed of at least EIF4A, EIF4E and EIF4G. EIF4E is also known to interact with other partners. In higher plants two isoforms of EIF4F have been identified, named isoform EIF4F and isoform EIF(iso)4F. Isoform EIF4F has subunits p220 and p26, whereas isoform EIF(iso)4F has subunits p82 and p28. (Microbial infection) Interacts with potyvirus viral genome-linked protein (VPg); this interaction is possible in susceptible hosts but impaired in resistant plants. According to the redox status, the Cys-129-Cys-167 disulfide bridge may have a role in regulating protein function by affecting its ability to bind capped mRNA.

The protein localises to the nucleus. It is found in the cytoplasm. In terms of biological role, component of the protein complex eIF4F, which is involved in the recognition of the mRNA cap, ATP-dependent unwinding of 5'-terminal secondary structure and recruitment of mRNA to the ribosome. Recognizes and binds the 7-methylguanosine-containing mRNA cap during an early step in the initiation of protein synthesis and facilitates ribosome binding by inducing the unwinding of the mRNAs secondary structures. Key component of recessive resistance to potyviruses. Its function is as follows. (Microbial infection) Susceptibility host factor required for viral infection (e.g. Potato virus Y (PVY)) by recruiting viral RNAs to the host ribosomal complex via an interaction with viral genome-linked protein (VPg). Displayed sequence is the allele Eva1 that confers resistance to potato virus Y (PVY) by failing to interact with the viral VPg protein. In Solanum etuberosum (Wild potato), this protein is Eukaryotic translation initiation factor 4E allele Eva1.